Here is a 188-residue protein sequence, read N- to C-terminus: Holliday junction branch migration complex subunit RuvA (188 aa).

Residues 1–64 are domain I; that stretch reads MIAGISGRVL…QDGITLYGFS (64 aa). The interval 65-143 is domain II; sequence NEMKKELFLS…SAGIKDMRIY (79 aa). Residue Y143 is a region of interest, flexible linker. The interval 143–186 is domain III; that stretch reads YHESLEALVSLGYPEKQAREAVKQVYREGMKTSELIKEALKFLS.

The protein belongs to the RuvA family. As to quaternary structure, homotetramer. Forms an RuvA(8)-RuvB(12)-Holliday junction (HJ) complex. HJ DNA is sandwiched between 2 RuvA tetramers; dsDNA enters through RuvA and exits via RuvB. An RuvB hexamer assembles on each DNA strand where it exits the tetramer. Each RuvB hexamer is contacted by two RuvA subunits (via domain III) on 2 adjacent RuvB subunits; this complex drives branch migration. In the full resolvosome a probable DNA-RuvA(4)-RuvB(12)-RuvC(2) complex forms which resolves the HJ.

Its subcellular location is the cytoplasm. Functionally, the RuvA-RuvB-RuvC complex processes Holliday junction (HJ) DNA during genetic recombination and DNA repair, while the RuvA-RuvB complex plays an important role in the rescue of blocked DNA replication forks via replication fork reversal (RFR). RuvA specifically binds to HJ cruciform DNA, conferring on it an open structure. The RuvB hexamer acts as an ATP-dependent pump, pulling dsDNA into and through the RuvAB complex. HJ branch migration allows RuvC to scan DNA until it finds its consensus sequence, where it cleaves and resolves the cruciform DNA. Promotes Holliday junction (HJ) branch migration in conjunction with RuvB. The sequence is that of Holliday junction branch migration complex subunit RuvA from Thermotoga maritima (strain ATCC 43589 / DSM 3109 / JCM 10099 / NBRC 100826 / MSB8).